Here is a 499-residue protein sequence, read N- to C-terminus: ADP,ATP carrier protein 5 (499 aa).

The next 11 membrane-spanning stretches (helical) occupy residues 25–45 (LGKFIPMSALMFCILFNQNIL), 61–81 (IAGFAKVYCVTPAAALFVIIY), 93–113 (IFYYLSAFFISFFVLFAFVIY), 148–168 (YIVYYSLAELWPNIFYVLLFW), 183–203 (FYTFFSLFGNSSLILVGFLMM), 223–243 (ITLVQVSTTIVAIVAIVCCVL), 286–306 (LWLLLICSAAFGFAINLVEAV), 327–347 (LYILWTGVAIMVMTIIGNNVM), 356–376 (AVISPVIIMVTGILFFVLIVF), 380–400 (ILSLFDGAILMSPLALAVSIG), and 468–488 (SISPILMVVFTFVCLAWIYAV).

The protein belongs to the ADP/ATP translocase tlc family.

It is found in the cell membrane. Its function is as follows. Provides the rickettsial cell with host ATP in exchange for rickettsial ADP. This is an obligate exchange system. This energy acquiring activity is an important component of rickettsial parasitism. The chain is ADP,ATP carrier protein 5 (tlcE) from Rickettsia felis (strain ATCC VR-1525 / URRWXCal2) (Rickettsia azadi).